Reading from the N-terminus, the 472-residue chain is tRNA(Ile)-lysidine synthase (472 aa).

S25–S30 provides a ligand contact to ATP.

This sequence belongs to the tRNA(Ile)-lysidine synthase family.

It is found in the cytoplasm. The catalysed reaction is cytidine(34) in tRNA(Ile2) + L-lysine + ATP = lysidine(34) in tRNA(Ile2) + AMP + diphosphate + H(+). Functionally, ligates lysine onto the cytidine present at position 34 of the AUA codon-specific tRNA(Ile) that contains the anticodon CAU, in an ATP-dependent manner. Cytidine is converted to lysidine, thus changing the amino acid specificity of the tRNA from methionine to isoleucine. The polypeptide is tRNA(Ile)-lysidine synthase (tilS) (Bacillus subtilis (strain 168)).